Consider the following 524-residue polypeptide: Cytochrome P450 6k1 (524 aa).

Position 464 (cysteine 464) interacts with heme.

It belongs to the cytochrome P450 family. Heme is required as a cofactor.

Its subcellular location is the endoplasmic reticulum membrane. The protein localises to the microsome membrane. This is Cytochrome P450 6k1 (CYP6K1) from Blattella germanica (German cockroach).